The sequence spans 372 residues: PqqA peptide cyclase (372 aa).

Positions 4–220 (APPPLSVLLE…ETARRQLGDR (217 aa)) constitute a Radical SAM core domain. [4Fe-4S] cluster contacts are provided by Cys-18, Cys-22, and Cys-25. The interval 342–372 (ATAEQESASPAPAFIYRRPERPAAATADPLE) is disordered.

This sequence belongs to the radical SAM superfamily. PqqE family. As to quaternary structure, interacts with PqqD. The interaction is necessary for activity of PqqE. [4Fe-4S] cluster serves as cofactor.

The catalysed reaction is [PQQ precursor protein] + S-adenosyl-L-methionine = E-Y cross-linked-[PQQ precursor protein] + 5'-deoxyadenosine + L-methionine + H(+). It participates in cofactor biosynthesis; pyrroloquinoline quinone biosynthesis. Catalyzes the cross-linking of a glutamate residue and a tyrosine residue in the PqqA protein as part of the biosynthesis of pyrroloquinoline quinone (PQQ). This Xanthomonas euvesicatoria pv. vesicatoria (strain 85-10) (Xanthomonas campestris pv. vesicatoria) protein is PqqA peptide cyclase.